The sequence spans 338 residues: Fructose-1,6-bisphosphatase class 1 (338 aa).

Residues Glu92, Asp113, Leu115, and Asp116 each coordinate Mg(2+). Substrate-binding positions include 116 to 119 (DGSS), Asn208, and Lys274. Glu280 is a Mg(2+) binding site.

This sequence belongs to the FBPase class 1 family. Homotetramer. The cofactor is Mg(2+).

It localises to the cytoplasm. It carries out the reaction beta-D-fructose 1,6-bisphosphate + H2O = beta-D-fructose 6-phosphate + phosphate. Its pathway is carbohydrate biosynthesis; gluconeogenesis. In Paramagnetospirillum magneticum (strain ATCC 700264 / AMB-1) (Magnetospirillum magneticum), this protein is Fructose-1,6-bisphosphatase class 1.